The primary structure comprises 378 residues: Erythronate-4-phosphate dehydrogenase (378 aa).

Ser45 and Thr66 together coordinate substrate. Position 146 (Asp146) interacts with NAD(+). The active site involves Arg207. Residue Asp231 participates in NAD(+) binding. Residue Glu236 is part of the active site. His253 functions as the Proton donor in the catalytic mechanism. Gly256 provides a ligand contact to NAD(+).

It belongs to the D-isomer specific 2-hydroxyacid dehydrogenase family. PdxB subfamily. As to quaternary structure, homodimer.

It is found in the cytoplasm. It carries out the reaction 4-phospho-D-erythronate + NAD(+) = (R)-3-hydroxy-2-oxo-4-phosphooxybutanoate + NADH + H(+). Its pathway is cofactor biosynthesis; pyridoxine 5'-phosphate biosynthesis; pyridoxine 5'-phosphate from D-erythrose 4-phosphate: step 2/5. Functionally, catalyzes the oxidation of erythronate-4-phosphate to 3-hydroxy-2-oxo-4-phosphonooxybutanoate. In Wigglesworthia glossinidia brevipalpis, this protein is Erythronate-4-phosphate dehydrogenase.